Here is a 1001-residue protein sequence, read N- to C-terminus: Transcription-repair-coupling factor (1001 aa).

Positions aspartate 499–leucine 658 constitute a Helicase ATP-binding domain. Glycine 512–threonine 519 is an ATP binding site. A DEEH box motif is present at residues aspartate 611–histidine 614. In terms of domain architecture, Helicase C-terminal spans leucine 679–arginine 835.

The protein in the N-terminal section; belongs to the UvrB family. This sequence in the C-terminal section; belongs to the helicase family. RecG subfamily.

The protein localises to the cytoplasm. Couples transcription and DNA repair by recognizing RNA polymerase (RNAP) stalled at DNA lesions. Mediates ATP-dependent release of RNAP and its truncated transcript from the DNA, and recruitment of nucleotide excision repair machinery to the damaged site. The protein is Transcription-repair-coupling factor of Helicobacter pylori (strain J99 / ATCC 700824) (Campylobacter pylori J99).